The sequence spans 485 residues: WD repeat-containing protein 13 (485 aa).

At Met1 the chain carries N-acetylmethionine. 3 positions are modified to phosphoserine: Ser70, Ser74, and Ser79. An Asymmetric dimethylarginine; alternate modification is found at Arg114. The residue at position 114 (Arg114) is an Omega-N-methylarginine; alternate. WD repeat units lie at residues Gly162 to Leu202, Thr208 to Ser246, Arg250 to Ile290, Lys295 to Met335, Thr341 to Asn389, Gln394 to Val438, and Ala444 to Arg482.

As to expression, widely expressed.

The protein resides in the nucleus. The sequence is that of WD repeat-containing protein 13 (WDR13) from Homo sapiens (Human).